Consider the following 310-residue polypeptide: Aspartate carbamoyltransferase catalytic subunit (310 aa).

Positions 55 and 56 each coordinate carbamoyl phosphate. Residue Lys-85 participates in L-aspartate binding. Carbamoyl phosphate-binding residues include Arg-106, His-135, and Gln-138. 2 residues coordinate L-aspartate: Arg-168 and Arg-230. Carbamoyl phosphate is bound by residues Leu-268 and Pro-269.

The protein belongs to the aspartate/ornithine carbamoyltransferase superfamily. ATCase family. Heterododecamer (2C3:3R2) of six catalytic PyrB chains organized as two trimers (C3), and six regulatory PyrI chains organized as three dimers (R2).

The catalysed reaction is carbamoyl phosphate + L-aspartate = N-carbamoyl-L-aspartate + phosphate + H(+). Its pathway is pyrimidine metabolism; UMP biosynthesis via de novo pathway; (S)-dihydroorotate from bicarbonate: step 2/3. Its function is as follows. Catalyzes the condensation of carbamoyl phosphate and aspartate to form carbamoyl aspartate and inorganic phosphate, the committed step in the de novo pyrimidine nucleotide biosynthesis pathway. The protein is Aspartate carbamoyltransferase catalytic subunit of Buchnera aphidicola subsp. Acyrthosiphon pisum (strain APS) (Acyrthosiphon pisum symbiotic bacterium).